A 491-amino-acid chain; its full sequence is 23S rRNA (uracil(1939)-C(5))-methyltransferase RlmD (491 aa).

A compositionally biased stretch (basic and acidic residues) spans 1–10 (MSDPTEHPEI). The tract at residues 1–28 (MSDPTEHPEILQDPSSSAPVQGRTDLPP) is disordered. The TRAM domain occupies 18–81 (APVQGRTDLP…NNWEQASLTA (64 aa)). The [4Fe-4S] cluster site is built by Cys-94, Cys-104, Cys-107, and Cys-186. S-adenosyl-L-methionine contacts are provided by Gln-294, Phe-323, Asn-328, Glu-344, Asn-379, and Asp-400. Cys-447 (nucleophile) is an active-site residue.

This sequence belongs to the class I-like SAM-binding methyltransferase superfamily. RNA M5U methyltransferase family. RlmD subfamily.

The enzyme catalyses uridine(1939) in 23S rRNA + S-adenosyl-L-methionine = 5-methyluridine(1939) in 23S rRNA + S-adenosyl-L-homocysteine + H(+). In terms of biological role, catalyzes the formation of 5-methyl-uridine at position 1939 (m5U1939) in 23S rRNA. The chain is 23S rRNA (uracil(1939)-C(5))-methyltransferase RlmD from Paracidovorax citrulli (strain AAC00-1) (Acidovorax citrulli).